We begin with the raw amino-acid sequence, 397 residues long: Tyrosine--tRNA ligase (397 aa).

The short motif at 41–50 (PTAPDLHLGH) is the 'HIGH' region element. The 'KMSKS' region signature appears at 225–229 (KMSKS). Lys228 is a binding site for ATP. One can recognise an S4 RNA-binding domain in the interval 340–396 (AFLADSGLAGSRGEAKRLIKQGALSLDGEKLDDPNTPLTAGEYVVRLGKKRFLRLIV).

This sequence belongs to the class-I aminoacyl-tRNA synthetase family. TyrS type 2 subfamily. As to quaternary structure, homodimer.

The protein localises to the cytoplasm. The enzyme catalyses tRNA(Tyr) + L-tyrosine + ATP = L-tyrosyl-tRNA(Tyr) + AMP + diphosphate + H(+). Catalyzes the attachment of tyrosine to tRNA(Tyr) in a two-step reaction: tyrosine is first activated by ATP to form Tyr-AMP and then transferred to the acceptor end of tRNA(Tyr). The polypeptide is Tyrosine--tRNA ligase (Oleidesulfovibrio alaskensis (strain ATCC BAA-1058 / DSM 17464 / G20) (Desulfovibrio alaskensis)).